The chain runs to 478 residues: ATP synthase subunit beta (478 aa).

158–165 (GGAGVGKT) lines the ATP pocket.

The protein belongs to the ATPase alpha/beta chains family. In terms of assembly, F-type ATPases have 2 components, CF(1) - the catalytic core - and CF(0) - the membrane proton channel. CF(1) has five subunits: alpha(3), beta(3), gamma(1), delta(1), epsilon(1). CF(0) has three main subunits: a(1), b(2) and c(9-12). The alpha and beta chains form an alternating ring which encloses part of the gamma chain. CF(1) is attached to CF(0) by a central stalk formed by the gamma and epsilon chains, while a peripheral stalk is formed by the delta and b chains.

It localises to the cell inner membrane. It carries out the reaction ATP + H2O + 4 H(+)(in) = ADP + phosphate + 5 H(+)(out). Produces ATP from ADP in the presence of a proton gradient across the membrane. The catalytic sites are hosted primarily by the beta subunits. The polypeptide is ATP synthase subunit beta (Rhizobium leguminosarum bv. trifolii (strain WSM2304)).